A 680-amino-acid chain; its full sequence is MDQFIDVVSFEIEAGHGGAGSVSFRREAHVPMGGPDGGNGGDGGDVIVRVDARINSFGKIKSRKRFRARDGEPGRARLSDGKRGDDVVIRVPIGTVVYDEDTNNILADLLEDGQSYTVARGGKGGKGNKFYATATNQAPDYAQHGLDGEKLNIRLEVKLIADIGLVGMPNTGKSSLLARLTRANPKIASYPFTTLTPNLGVCYLDYERSFVIADIPGIIEGASEGAGLGLTFLRHIERTGALCFVIDLTDEDVADTYKKLRNELKQYSKELIKKKSIIVLNKTDMLEKDEIKAKVKAIEKAVKKEYKNNKETHYEEPEIFALSVFSLDGDMLDKVTNAFYKANEERYDNTKKETKEPLLLNQNKTKSKLKTKRVFGPVVSKRLGNSLGIDVIPHKTCSYNCIYCQLGSEENTKTSLANYYSVDEIIYELKEALLNNKNIDYITFAGSGEPTLYKDLKKLIYEIKQITDIPVCIITNGSLLYKQEMRSDLLIADLVIPSLDAGNMDTFKLIDQPNKEIDFDKMVNGLIEFRRVFKGEYWLEVFLLKDINDSKEELDDIIKIVNKIKPDRVQLVTATRRTSNEKAKALNDEEMEKAKKYFEANCSIEIDVPSVSDKAKGNTKKITEEDIINFLIRQPDTVHMIAISFNEDESRVSELLKKLVESGKVREEIVNGVLSYAVNI.

Residues 2–160 (DQFIDVVSFE…LNIRLEVKLI (159 aa)) enclose the Obg domain. The OBG-type G domain maps to 161–336 (ADIGLVGMPN…LDGDMLDKVT (176 aa)). GTP-binding positions include 167–174 (GMPNTGKS), 192–196 (FTTLT), 214–217 (DIPG), 281–284 (NKTD), and 317–319 (PEI). 2 residues coordinate Mg(2+): Ser-174 and Thr-194. Residues 371–680 (TKRVFGPVVS…NGVLSYAVNI (310 aa)) are radical SAM domain. The Radical SAM core domain occupies 383 to 613 (LGNSLGIDVI…IEIDVPSVSD (231 aa)). The [4Fe-4S] cluster site is built by Cys-397, Cys-401, and Cys-404.

It belongs to the TRAFAC class OBG-HflX-like GTPase superfamily. OBG GTPase family. As to quaternary structure, monomer. Requires Mg(2+) as cofactor. [4Fe-4S] cluster is required as a cofactor.

Its subcellular location is the cytoplasm. An essential GTPase which binds GTP, GDP and possibly (p)ppGpp with moderate affinity, with high nucleotide exchange rates and a fairly low GTP hydrolysis rate. Plays a role in control of the cell cycle, stress response, ribosome biogenesis and in those bacteria that undergo differentiation, in morphogenesis control. The polypeptide is GTPase Obg (Brachyspira hyodysenteriae (strain ATCC 49526 / WA1)).